Reading from the N-terminus, the 193-residue chain is 2',3'-cyclic-nucleotide 3'-phosphodiesterase (193 aa).

His-40 acts as the Proton donor/acceptor in catalysis. Thr-42 lines the substrate pocket. His-129 functions as the Proton donor/acceptor in the catalytic mechanism. Residues Ser-131 and Tyr-134 each coordinate substrate.

The protein belongs to the 2H phosphoesterase superfamily. CPD1 family.

The protein resides in the golgi apparatus. It carries out the reaction a nucleoside 2',3'-cyclic phosphate + H2O = a nucleoside 2'-phosphate + H(+). In terms of biological role, involved in the metabolism of ADP-ribose 1',2'-cyclic phosphate which is produced as a consequence of tRNA splicing. The sequence is that of 2',3'-cyclic-nucleotide 3'-phosphodiesterase (CPD1) from Phaeosphaeria nodorum (strain SN15 / ATCC MYA-4574 / FGSC 10173) (Glume blotch fungus).